Here is an 81-residue protein sequence, read N- to C-terminus: Large ribosomal subunit protein uL23 (81 aa).

This sequence belongs to the universal ribosomal protein uL23 family. As to quaternary structure, part of the 50S ribosomal subunit. Contacts protein L29.

In terms of biological role, binds to 23S rRNA. One of the proteins that surrounds the polypeptide exit tunnel on the outside of the ribosome. In Pyrobaculum aerophilum (strain ATCC 51768 / DSM 7523 / JCM 9630 / CIP 104966 / NBRC 100827 / IM2), this protein is Large ribosomal subunit protein uL23.